Reading from the N-terminus, the 477-residue chain is AAA-ATPase At3g28600 (477 aa).

The first 26 residues, 1–26 (MMMGNTFGSSLASLFFLWATIQQIFP), serve as a signal peptide directing secretion. 245 to 252 (GPPGTGKS) contributes to the ATP binding site.

The protein belongs to the AAA ATPase family. BCS1 subfamily. The cofactor is Mg(2+).

It catalyses the reaction ATP + H2O = ADP + phosphate + H(+). The protein is AAA-ATPase At3g28600 of Arabidopsis thaliana (Mouse-ear cress).